Reading from the N-terminus, the 212-residue chain is 2-dehydro-3-deoxy-phosphogluconate aldolase (212 aa).

The active-site Proton acceptor is glutamate 45. Pyruvate contacts are provided by arginine 49, threonine 73, and lysine 133. Lysine 133 (schiff-base intermediate with substrate) is an active-site residue.

It belongs to the KHG/KDPG aldolase family. Homotrimer.

The protein localises to the cytoplasm. The enzyme catalyses 2-dehydro-3-deoxy-6-phospho-D-gluconate = D-glyceraldehyde 3-phosphate + pyruvate. Its pathway is carbohydrate acid metabolism; 2-dehydro-3-deoxy-D-gluconate degradation; D-glyceraldehyde 3-phosphate and pyruvate from 2-dehydro-3-deoxy-D-gluconate: step 2/2. Functionally, involved in the degradation of glucose via the Entner-Doudoroff pathway. Catalyzes the reversible, stereospecific retro-aldol cleavage of 2-keto-3-deoxy-6-phosphogluconate (KDPG) to pyruvate and D-glyceraldehyde-3-phosphate. In Haemophilus influenzae (strain ATCC 51907 / DSM 11121 / KW20 / Rd), this protein is 2-dehydro-3-deoxy-phosphogluconate aldolase (eda).